The chain runs to 472 residues: Eukaryotic translation initiation factor 2 subunit 3 (472 aa).

N-acetylalanine; partial is present on A2. One can recognise a tr-type G domain in the interval 39–247 (QATINIGTIG…YIVKKIPVPL (209 aa)). The interval 48-55 (GHVAHGKS) is G1. Residue 51–56 (AHGKST) coordinates GTP. A G2 region spans residues 76-80 (NITIK). The interval 134-137 (DCPG) is G3. Residues 190-193 (NKID) and 225-227 (SAQ) contribute to the GTP site. Residues 190-193 (NKID) form a G4 region. Residues 225 to 227 (SAQ) are G5. The segment at 457–469 (GQIRRGVTIKPTV) is interacts with CDC123.

This sequence belongs to the TRAFAC class translation factor GTPase superfamily. Classic translation factor GTPase family. EIF2G subfamily. In terms of assembly, eukaryotic translation initiation factor 2 eIF2 is a heterotrimeric complex composed of an alpha (EIF2S1), a beta (EIF2S2) and a gamma (EIF2S3) chain. eIF2 is member of the 43S pre-initiation complex (43S PIC).

The protein resides in the cytoplasm. It localises to the cytosol. The enzyme catalyses GTP + H2O = GDP + phosphate + H(+). In terms of biological role, member of the eIF2 complex that functions in the early steps of protein synthesis by forming a ternary complex with GTP and initiator tRNA. This complex binds to a 40S ribosomal subunit, followed by mRNA binding to form the 43S pre-initiation complex (43S PIC). Junction of the 60S ribosomal subunit to form the 80S initiation complex is preceded by hydrolysis of the GTP bound to eIF2 and release of an eIF2-GDP binary complex. In order for eIF2 to recycle and catalyze another round of initiation, the GDP bound to eIF2 must exchange with GTP by way of a reaction catalyzed by eIF-2B. This chain is Eukaryotic translation initiation factor 2 subunit 3 (EIF2S3), found in Gallus gallus (Chicken).